The primary structure comprises 421 residues: D-amino acid dehydrogenase (421 aa).

3–17 (VIVLGSGVIGVASAY) provides a ligand contact to FAD.

It belongs to the DadA oxidoreductase family. FAD serves as cofactor.

The enzyme catalyses a D-alpha-amino acid + A + H2O = a 2-oxocarboxylate + AH2 + NH4(+). It functions in the pathway amino-acid degradation; D-alanine degradation; NH(3) and pyruvate from D-alanine: step 1/1. In terms of biological role, oxidative deamination of D-amino acids. This is D-amino acid dehydrogenase from Acinetobacter baumannii (strain AB307-0294).